Consider the following 122-residue polypeptide: Large ribosomal subunit protein uL14 (122 aa).

This sequence belongs to the universal ribosomal protein uL14 family. In terms of assembly, part of the 50S ribosomal subunit. Forms a cluster with proteins L3 and L19. In the 70S ribosome, L14 and L19 interact and together make contacts with the 16S rRNA in bridges B5 and B8.

Binds to 23S rRNA. Forms part of two intersubunit bridges in the 70S ribosome. This is Large ribosomal subunit protein uL14 from Psychrobacter arcticus (strain DSM 17307 / VKM B-2377 / 273-4).